The primary structure comprises 484 residues: Glutamate--tRNA ligase (484 aa).

The 'HIGH' region signature appears at proline 11–asparagine 21. Residues lysine 255 to arginine 259 carry the 'KMSKS' region motif. Lysine 258 serves as a coordination point for ATP.

The protein belongs to the class-I aminoacyl-tRNA synthetase family. Glutamate--tRNA ligase type 1 subfamily. Monomer.

It localises to the cytoplasm. It carries out the reaction tRNA(Glu) + L-glutamate + ATP = L-glutamyl-tRNA(Glu) + AMP + diphosphate. Functionally, catalyzes the attachment of glutamate to tRNA(Glu) in a two-step reaction: glutamate is first activated by ATP to form Glu-AMP and then transferred to the acceptor end of tRNA(Glu). The polypeptide is Glutamate--tRNA ligase (Streptococcus agalactiae serotype III (strain NEM316)).